Reading from the N-terminus, the 445-residue chain is Probable fructoselysine/psicoselysine transporter FrlA (445 aa).

11 helical membrane-spanning segments follow: residues 10-32 (LGFWAVLAIAVGTTVGSGIFVSV), 39-61 (AGTPWLTVLAFVIGGLIVIPQMC), 97-119 (FWANDAPSLSIMALAIVSNLGFL), 126-143 (LGKFIAAGLIIAFMLLHL), 153-175 (QTLITIAKIIPFTIVIGLGIFWF), 188-210 (IGATGSFMALLAGISATSWSYTG), 230-252 (RALIGSCLLVLVLYTLLALVISG), 272-294 (WIPALGSTAGIFVAITAMIVILG), 341-363 (GIFFIFVSDLTSLLGYFTLVMCF), 384-406 (LWRTPAFGLMTPLAIASSLILVA), and 411-433 (WAPIPGLICAVIVIATGLPAYAF).

Belongs to the amino acid-polyamine-organocation (APC) superfamily.

The protein localises to the cell inner membrane. The enzyme catalyses N(6)-(D-fructosyl)-L-lysine(in) = N(6)-(D-fructosyl)-L-lysine(out). The catalysed reaction is N(6)-(D-psicosyl)-L-lysine(in) = N(6)-(D-psicosyl)-L-lysine(out). It participates in carbohydrate metabolism; fructoselysine degradation. Is likely involved in the transport of fructoselysine and psicoselysine to the cytoplasm, where they are degraded. The protein is Probable fructoselysine/psicoselysine transporter FrlA (frlA) of Escherichia coli O157:H7.